We begin with the raw amino-acid sequence, 765 residues long: 1,4-alpha-glucan branching enzyme GlgB (765 aa).

Aspartate 431 acts as the Nucleophile in catalysis. Catalysis depends on glutamate 484, which acts as the Proton donor.

The protein belongs to the glycosyl hydrolase 13 family. GlgB subfamily. Monomer.

The catalysed reaction is Transfers a segment of a (1-&gt;4)-alpha-D-glucan chain to a primary hydroxy group in a similar glucan chain.. The protein operates within glycan biosynthesis; glycogen biosynthesis. In terms of biological role, catalyzes the formation of the alpha-1,6-glucosidic linkages in glycogen by scission of a 1,4-alpha-linked oligosaccharide from growing alpha-1,4-glucan chains and the subsequent attachment of the oligosaccharide to the alpha-1,6 position. This Synechococcus sp. (strain CC9605) protein is 1,4-alpha-glucan branching enzyme GlgB.